Consider the following 786-residue polypeptide: Myosin light chain kinase 3 (786 aa).

A Phosphoserine modification is found at Ser-155. Disordered stretches follow at residues 233-258, 279-315, and 333-443; these read EALDPGQEPPPTEAESRLPALASEDT, RMSQSAGEGTSSSKPDCSEPGPQPLGPLTTDSDIHSD, and ELFE…GRRV. Residues 279-293 are compositionally biased toward polar residues; the sequence is RMSQSAGEGTSSSKP. Residues Ser-341 and Ser-422 each carry the phosphoserine modification. The 256-residue stretch at 482–737 folds into the Protein kinase domain; it reads VSQHEVLGGG…ATQCLKHEWL (256 aa). ATP is bound by residues 488-496 and Lys-511; that span reads LGGGRFGQV. The active-site Proton acceptor is the Asp-603.

It belongs to the protein kinase superfamily. CAMK Ser/Thr protein kinase family. The cofactor is Mg(2+). Post-translationally, phosphorylated on serine residues. Expressed in cardiomyocytes (at protein level). Up-regulated in heart after experimental myocardial infarction at the mRNA level.

The protein localises to the cytoplasm. It catalyses the reaction L-seryl-[myosin light chain] + ATP = O-phospho-L-seryl-[myosin light chain] + ADP + H(+). The enzyme catalyses L-threonyl-[myosin light chain] + ATP = O-phospho-L-threonyl-[myosin light chain] + ADP + H(+). Calmodulin-dependent kinase that phosphorylates MYL2 in vitro. Promotes sarcomere formation in cardiomyocytes. Increases cardiomyocyte contractility. This Rattus norvegicus (Rat) protein is Myosin light chain kinase 3 (Mylk3).